The primary structure comprises 432 residues: Histidine--tRNA ligase (432 aa).

This sequence belongs to the class-II aminoacyl-tRNA synthetase family. In terms of assembly, homodimer.

Its subcellular location is the cytoplasm. The catalysed reaction is tRNA(His) + L-histidine + ATP = L-histidyl-tRNA(His) + AMP + diphosphate + H(+). This is Histidine--tRNA ligase from Ralstonia nicotianae (strain ATCC BAA-1114 / GMI1000) (Ralstonia solanacearum).